A 215-amino-acid polypeptide reads, in one-letter code: Ras-related protein SEC4 (215 aa).

A GTP-binding site is contributed by 27-34 (GDSGVGKS). The short motif at 49 to 57 (FITTIGIDF) is the Effector region element. Residues 75 to 79 (DTAGQ) and 133 to 136 (NKSD) each bind GTP. 2 positions are modified to phosphoserine: Ser201 and Ser204. Residues Cys214 and Cys215 are each lipidated (S-geranylgeranyl cysteine).

The protein belongs to the small GTPase superfamily. Rab family. In terms of assembly, interacts with the guanyl-nucleotide exchange factor SEC2. Interacts with SRO7, YIF1, YIP3, YIP4 and YIP5.

The protein resides in the cytoplasmic vesicle. It is found in the secretory vesicle membrane. The protein localises to the cell membrane. It localises to the cytoplasm. Involved in exocytosis. Maybe by regulating the binding and fusion of secretory vesicles with the cell surface. The GTP-bound form of SEC4 may interact with an effector, thereby stimulating its activity and leading to exocytotic fusion. SEC4 may be an upstream activator of the 19.5S SEC8/SEC15 particle. SEC4 probably interacts directly with SEC8; it could serve as the attachment site for the SEC8/SEC15 particle. In Saccharomyces cerevisiae (strain ATCC 204508 / S288c) (Baker's yeast), this protein is Ras-related protein SEC4 (SEC4).